A 635-amino-acid chain; its full sequence is Rab11 family-interacting protein 4 (635 aa).

One can recognise an EF-hand domain in the interval 49 to 84; it reads GQGEEVEKLVKCLDPNDLGRINFKDFCRGVFAMKGC. Ca(2+) is bound by residues aspartate 62, asparagine 64, arginine 68, and aspartate 73. The segment at 82 to 635 is necessary for interaction with RAB11A, subcellular location, homo- or heterooligomerization; sequence KGCEELLKDV…HNPSILEIKH (554 aa). Disordered stretches follow at residues 147–176 and 216–258; these read GPQE…EKEP and EDYG…QTPR. Positions 216–225 are enriched in acidic residues; that stretch reads EDYGEGDDVD. Positions 279-615 form a coiled coil; it reads KINLLNDLEA…EEINFRLRQY (337 aa). One can recognise an FIP-RBD domain in the interval 572–634; sequence EAKNLFATQT…DHNPSILEIK (63 aa).

As to quaternary structure, homodimer. Forms a complex with Rab11 (RAB11A or RAB11B) and ARF6. Interacts with RAB11A; the interaction is direct. Forms a heterooligomeric complex with RAB11FIP2, RAB11FIP3 and RAB11FIP5. Interacts with ECPAS. As to expression, strongly expressed in the developing retina. Expressed predominantly in neural tissues.

It localises to the recycling endosome membrane. It is found in the cleavage furrow. The protein localises to the midbody. Its subcellular location is the cytoplasmic vesicle. In terms of biological role, acts as a regulator of endocytic traffic by participating in membrane delivery. Required for the abscission step in cytokinesis, possibly by acting as an 'address tag' delivering recycling endosome membranes to the cleavage furrow during late cytokinesis. May play a role in differentiation during retinal development, in a Rab11-independent manner. The chain is Rab11 family-interacting protein 4 (Rab11fip4) from Mus musculus (Mouse).